A 541-amino-acid polypeptide reads, in one-letter code: MDFSSLLLLLLNTWISAYSMAALLALVLVYNLRMTKSSSSKTTSLKGKKIITRPPAVTGAWPVFGHLHLFGSGEHPHEMLSKLAEKYGPSFTMKFGKHTTLVVSDTRVVKECFTTNDTLFSNRPSTIAFDLMTYATDSIAFTPYSPYWRELRKISTLKLLSNNRLESIKQLRTSEVSVCFKELYDLTNKKNDNGAPVPIDLKRWFDEVSNNVIMRVIFGKQNFGSKIVLGEDQEAVHYKKIMDELSRLSSLTMLSDMVPLLGWLDYFKGDLRAMKRNGKELNSILQKWLEEHKSKKSSDARQDFMDVMLSISKDTQLYGHDQDTFIKATCLAMIMGGTNSTEVALTWILSLLMNNRCALHKAREEIDLLVGKDRQVEDSDVKNLTYMNAIIKETMRLYPLGFLLERDTKEDCEVSGFNIKGGTRLLINVWKLQRDPNVWTDPMEFKPERFLTENADIDVGGQHFELLPFGAGRRVCPGVSFALQFMHLVLARLIHGYDMETLNGEDVDLSVSSGGHVNIKSTPLELILTPRLHPELYDCET.

Residues 9–29 (LLLNTWISAYSMAALLALVLV) traverse the membrane as a helical segment. A heme-binding site is contributed by Cys-476.

Belongs to the cytochrome P450 family. Heme is required as a cofactor.

It is found in the endoplasmic reticulum membrane. The catalysed reaction is protopine + reduced [NADPH--hemoprotein reductase] + O2 = 6-hydroxyprotopine + oxidized [NADPH--hemoprotein reductase] + H2O + H(+). The protein operates within alkaloid biosynthesis. Its function is as follows. Catalyzes the conversion of protopine and allocryptopine to dihydrosanguinarine and dihydrochelerythrine, respectively, in the biosynthesis of isoquinoline alkaloid sanguinarine. This is Protopine 6-monooxygenase (CYP82N3) from Papaver somniferum (Opium poppy).